The sequence spans 274 residues: MAIHLYKTSTPSTRNGAVGSQVKSNPRNNLIYGQRHCGKGRNARGIITVRHRGGGHKRLYRKIDFRRNEKDISGKIVTIEYDPNRNAYICLIHYGDGEKRYILHPRGAIIGDTIVSGTEVPISMGNALPLTDMPLGTAIHNIEITLGKGGQLARAAGAVAKLIAKEGKSATLKLPSGEVRLISKNCSATVGQVGNVGVNQKSLGRAGSKRWLGKRPVVRGVVMNPVDHPHGGGEGRAPIGRKKPTTPWGYPALGRRSRKRNKYSDSLILRRRSK.

2 disordered regions span residues 1-23 and 223-274; these read MAIH…SQVK and MNPV…RRSK.

This sequence belongs to the universal ribosomal protein uL2 family. As to quaternary structure, part of the 50S ribosomal subunit.

Its subcellular location is the plastid. The protein resides in the chloroplast. The chain is Large ribosomal subunit protein uL2cz/uL2cy (rpl2-A) from Ranunculus macranthus (Large buttercup).